The chain runs to 284 residues: RNase adapter protein RapZ (284 aa).

ATP is bound at residue 8-15 (GRSGSGKS). 56–59 (DVRN) serves as a coordination point for GTP. The RNA-binding stretch occupies residues 266–284 (RARGKNVQSRHRTLEKRKQ).

Belongs to the RapZ-like family. RapZ subfamily. Homotrimer.

In terms of biological role, modulates the synthesis of GlmS, by affecting the processing and stability of the regulatory small RNA GlmZ. When glucosamine-6-phosphate (GlcN6P) concentrations are high in the cell, RapZ binds GlmZ and targets it to cleavage by RNase E. Consequently, GlmZ is inactivated and unable to activate GlmS synthesis. Under low GlcN6P concentrations, RapZ is sequestered and inactivated by an other regulatory small RNA, GlmY, preventing GlmZ degradation and leading to synthesis of GlmS. In Yersinia pseudotuberculosis serotype O:1b (strain IP 31758), this protein is RNase adapter protein RapZ.